The sequence spans 173 residues: PTS system glucose-specific EIIA component (173 aa).

The region spanning 40 to 144 is the PTS EIIA type-1 domain; it reads DPTFAQKMMG…STVTPVVVTN (105 aa). The Zn(2+) site is built by histidine 77 and histidine 92. The active-site Tele-phosphohistidine intermediate; for EIIA activity is the histidine 92. At histidine 92 the chain carries Phosphohistidine; by HPr.

Heterodimer with glycerol kinase (glpk). Zn(2+) serves as cofactor.

Its subcellular location is the cytoplasm. The phosphoenolpyruvate-dependent sugar phosphotransferase system (sugar PTS), a major carbohydrate active transport system, catalyzes the phosphorylation of incoming sugar substrates concomitantly with their translocation across the cell membrane. The enzyme II complex composed of PtsG and Crr is involved in glucose transport. This chain is PTS system glucose-specific EIIA component (crr), found in Halalkalibacterium halodurans (strain ATCC BAA-125 / DSM 18197 / FERM 7344 / JCM 9153 / C-125) (Bacillus halodurans).